Consider the following 201-residue polypeptide: Holliday junction branch migration complex subunit RuvA (201 aa).

Positions 1–64 (MIGRLHGKII…EDAHLLFGFA (64 aa)) are domain I. The domain II stretch occupies residues 65 to 143 (QKQDRTLFRE…GVAQSDFFEE (79 aa)). The segment at 144 to 154 (HSVETIVATHS) is flexible linker. Residues 154-201 (SHDPADEARDALVALGYKLADAEKMIKKVNKAGATSEQLIREALKASL) are domain III.

It belongs to the RuvA family. As to quaternary structure, homotetramer. Forms an RuvA(8)-RuvB(12)-Holliday junction (HJ) complex. HJ DNA is sandwiched between 2 RuvA tetramers; dsDNA enters through RuvA and exits via RuvB. An RuvB hexamer assembles on each DNA strand where it exits the tetramer. Each RuvB hexamer is contacted by two RuvA subunits (via domain III) on 2 adjacent RuvB subunits; this complex drives branch migration. In the full resolvosome a probable DNA-RuvA(4)-RuvB(12)-RuvC(2) complex forms which resolves the HJ.

The protein localises to the cytoplasm. The RuvA-RuvB-RuvC complex processes Holliday junction (HJ) DNA during genetic recombination and DNA repair, while the RuvA-RuvB complex plays an important role in the rescue of blocked DNA replication forks via replication fork reversal (RFR). RuvA specifically binds to HJ cruciform DNA, conferring on it an open structure. The RuvB hexamer acts as an ATP-dependent pump, pulling dsDNA into and through the RuvAB complex. HJ branch migration allows RuvC to scan DNA until it finds its consensus sequence, where it cleaves and resolves the cruciform DNA. This is Holliday junction branch migration complex subunit RuvA from Actinobacillus pleuropneumoniae serotype 5b (strain L20).